The sequence spans 319 residues: Acetyl-coenzyme A carboxylase carboxyl transferase subunit alpha (319 aa).

The 262-residue stretch at 35–296 (DLDKEIEQLE…KATLVANLAE (262 aa)) folds into the CoA carboxyltransferase C-terminal domain.

This sequence belongs to the AccA family. As to quaternary structure, acetyl-CoA carboxylase is a heterohexamer composed of biotin carboxyl carrier protein (AccB), biotin carboxylase (AccC) and two subunits each of ACCase subunit alpha (AccA) and ACCase subunit beta (AccD).

The protein resides in the cytoplasm. The enzyme catalyses N(6)-carboxybiotinyl-L-lysyl-[protein] + acetyl-CoA = N(6)-biotinyl-L-lysyl-[protein] + malonyl-CoA. The protein operates within lipid metabolism; malonyl-CoA biosynthesis; malonyl-CoA from acetyl-CoA: step 1/1. Its function is as follows. Component of the acetyl coenzyme A carboxylase (ACC) complex. First, biotin carboxylase catalyzes the carboxylation of biotin on its carrier protein (BCCP) and then the CO(2) group is transferred by the carboxyltransferase to acetyl-CoA to form malonyl-CoA. This chain is Acetyl-coenzyme A carboxylase carboxyl transferase subunit alpha, found in Photobacterium profundum (strain SS9).